Reading from the N-terminus, the 283-residue chain is CDP-abequose synthase (283 aa).

NAD(+) contacts are provided by residues 7–13 (GGSGYIG), 48–49 (EF), Tyr129, and Lys133. The active-site Proton acceptor is the Tyr129.

Belongs to the NAD(P)-dependent epimerase/dehydratase family.

It carries out the reaction CDP-alpha-D-abequose + NADP(+) = CDP-4-dehydro-3,6-dideoxy-alpha-D-glucose + NADPH + H(+). The protein operates within bacterial outer membrane biogenesis; LPS O-antigen biosynthesis. Functionally, the CDP-abequose synthase is involved in lipopolysaccharides (LPS) synthesis containing abequose which are important antigens of the cell surface responsible for the serological O specificity. Derivatives of the 3,6-dideoxyhexose group have a particular highly immunogenic character. This is CDP-abequose synthase (rfbJ) from Yersinia pseudotuberculosis.